Here is a 410-residue protein sequence, read N- to C-terminus: Transcription termination factor, mitochondrial (410 aa).

The transit peptide at 1-44 directs the protein to the mitochondrion; that stretch reads MIRSLLRSFETALKLHAGLNMHPMHCSRRLLFSQYENRASPSRL.

It belongs to the mTERF family.

The protein localises to the mitochondrion. Functionally, transcription termination factor. Binds promoter DNA and regulates mitochondrial replication and transcription. Transcription termination activity may be polarized with highest termination activity occurring when its DNA-binding site is positioned in the reverse orientation with respect to the incoming RNA polymerase. Required for normal topology and maintenance of mitochondrial DNA (mtDNA) levels. Regulates mtDNA replication by promoting replication pausing, possibly by acting as a natural barrier to replication fork progression. Its function in replication pausing prevents unregulated replication that may occur for example by collisions between the machineries of DNA replication and transcription during mtDNA synthesis. This ensures the incorporation of RNA transcripts into replication intermediates at the replication fork and allow for proper fork progression. Shares mtDNA binding sites with the mitochondrial termination factor mTerf5 and thereby may antagonize mTerf5 function during replication to regulate pausing. Likely to function downstream of Dref which activates genes involved in mtDNA replication and maintenance. In Drosophila melanogaster (Fruit fly), this protein is Transcription termination factor, mitochondrial.